The primary structure comprises 349 residues: Anthranilate phosphoribosyltransferase (349 aa).

Residues Gly-82, 85 to 86, 92 to 95, 110 to 118, and Ser-122 each bind 5-phospho-alpha-D-ribose 1-diphosphate; these read GD, NVST, and KHGNRAVSG. Gly-82 serves as a coordination point for anthranilate. Position 94 (Ser-94) interacts with Mg(2+). Asn-113 is an anthranilate binding site. Residue Arg-168 coordinates anthranilate. Positions 227 and 228 each coordinate Mg(2+).

This sequence belongs to the anthranilate phosphoribosyltransferase family. Homodimer. Mg(2+) is required as a cofactor.

It catalyses the reaction N-(5-phospho-beta-D-ribosyl)anthranilate + diphosphate = 5-phospho-alpha-D-ribose 1-diphosphate + anthranilate. Its pathway is amino-acid biosynthesis; L-tryptophan biosynthesis; L-tryptophan from chorismate: step 2/5. In terms of biological role, catalyzes the transfer of the phosphoribosyl group of 5-phosphorylribose-1-pyrophosphate (PRPP) to anthranilate to yield N-(5'-phosphoribosyl)-anthranilate (PRA). In Pseudomonas putida (strain ATCC 700007 / DSM 6899 / JCM 31910 / BCRC 17059 / LMG 24140 / F1), this protein is Anthranilate phosphoribosyltransferase.